Reading from the N-terminus, the 180-residue chain is uncharacterized protein (180 aa).

The Macro domain maps to 1–180; that stretch reads MVEFEIVKGD…KDYERALRAV (180 aa).

This is an uncharacterized protein from Thermococcus kodakarensis (strain ATCC BAA-918 / JCM 12380 / KOD1) (Pyrococcus kodakaraensis (strain KOD1)).